We begin with the raw amino-acid sequence, 393 residues long: MQTSHYAAEKDMQDAAPRLTFTLRDEERLMMKIGVFVPIGNNGWLISTHAPQYMPTFELNKAIVQKAEHYHFDFALSMIKLRGFGGKTEFWDHNLESFTLMAGLAAVTSRIQIYATAATLTLPPAIVARMAATIDSISGGRFGVNLVTGWQKPEYEQMGIWPGDDYFSRRYDYLTEYVQVLRDLWGSGKSDFKGDFFTMDDCRVSPQPSVPMKVICAGQSDAGMAFSARYADFNFCFGKGVNTPTAFAPTAARMKQAAEQTGRDVGSYVLFMVIADETDDAARAKWEHYKAGADEEALSWLTEQSQKDTRSGTDTNVRQMADPTSAVNINMGTLVGSYASVARMLDEVASVPGAEGVLLTFDDFLSGIENFGERIQPLMQCRAHLPALTQEVA.

FMN is bound by residues 79-80, asparagine 145, glutamate 154, 170-171, and serine 220; these read IK and RY.

This sequence belongs to the NtaA/SnaA/DszA monooxygenase family. RutA subfamily.

The catalysed reaction is uracil + FMNH2 + NADH + O2 = (Z)-3-ureidoacrylate + FMN + NAD(+) + H2O + H(+). The enzyme catalyses thymine + FMNH2 + NADH + O2 = (Z)-2-methylureidoacrylate + FMN + NAD(+) + H2O + H(+). Functionally, catalyzes the pyrimidine ring opening between N-3 and C-4 by an unusual flavin hydroperoxide-catalyzed mechanism, adding oxygen atoms in the process to yield ureidoacrylate peracid, that immediately reacts with FMN forming ureidoacrylate and FMN-N(5)-oxide. The FMN-N(5)-oxide reacts spontaneously with NADH to produce FMN. Requires the flavin reductase RutF to regenerate FMN in vivo. This Escherichia coli O18:K1:H7 (strain IHE3034 / ExPEC) protein is Pyrimidine monooxygenase RutA.